Reading from the N-terminus, the 419-residue chain is Protein arginine N-methyltransferase 8-B (419 aa).

A compositionally biased stretch (basic residues) spans 1–14 (MGLRHSSRCLLLRR). A disordered region spans residues 1–79 (MGLRHSSRCL…HTPHVSALSA (79 aa)). A lipid anchor (N-myristoyl glycine) is attached at Gly2. Residues 33–63 (QHQQQQSISSIPSSQSLQPSPLPKPVTSVHH) show a composition bias toward low complexity. Omega-N-methylarginine is present on Arg83. Arg98 carries the post-translational modification Asymmetric dimethylarginine. Residues 98–402 (RDYYFDSYAH…RDLDFTFELD (305 aa)) enclose the SAM-dependent MTase PRMT-type domain. Residues His111, Arg120, Gly144, 144–147 (GSGT), Glu166, and Glu195 contribute to the S-adenosyl-L-methionine site. Active-site residues include Glu210 and Glu219.

It belongs to the class I-like SAM-binding methyltransferase superfamily. Protein arginine N-methyltransferase family. PRMT8 subfamily. In terms of assembly, homodimer. Tetramer; individual homodimers associates to form a homotetramer. Homooctamer; individual homodimers associates to form a homooctamer and homooligomerization is required for proper localization to the cell membrane.

The protein localises to the cell membrane. The catalysed reaction is L-arginyl-[protein] + S-adenosyl-L-methionine = N(omega)-methyl-L-arginyl-[protein] + S-adenosyl-L-homocysteine + H(+). It catalyses the reaction L-arginyl-[protein] + 2 S-adenosyl-L-methionine = N(omega),N(omega)-dimethyl-L-arginyl-[protein] + 2 S-adenosyl-L-homocysteine + 2 H(+). Functionally, S-adenosyl-L-methionine-dependent and membrane-associated arginine methyltransferase that can both catalyze the formation of omega-N monomethylarginine (MMA) and asymmetrical dimethylarginine (aDMA). In Danio rerio (Zebrafish), this protein is Protein arginine N-methyltransferase 8-B (prmt8b).